A 242-amino-acid chain; its full sequence is Phosphoribosylaminoimidazole-succinocarboxamide synthase (242 aa).

Belongs to the SAICAR synthetase family.

The enzyme catalyses 5-amino-1-(5-phospho-D-ribosyl)imidazole-4-carboxylate + L-aspartate + ATP = (2S)-2-[5-amino-1-(5-phospho-beta-D-ribosyl)imidazole-4-carboxamido]succinate + ADP + phosphate + 2 H(+). It participates in purine metabolism; IMP biosynthesis via de novo pathway; 5-amino-1-(5-phospho-D-ribosyl)imidazole-4-carboxamide from 5-amino-1-(5-phospho-D-ribosyl)imidazole-4-carboxylate: step 1/2. In Methanocaldococcus jannaschii (strain ATCC 43067 / DSM 2661 / JAL-1 / JCM 10045 / NBRC 100440) (Methanococcus jannaschii), this protein is Phosphoribosylaminoimidazole-succinocarboxamide synthase (purC).